The chain runs to 468 residues: GTPase Der (468 aa).

2 EngA-type G domains span residues 3–169 (PVMA…SPPD) and 199–372 (IRLA…KAAT). GTP contacts are provided by residues 9 to 16 (GRANVGKS), 56 to 60 (DTGGF), 119 to 122 (NKAE), 205 to 212 (GRPNVGKS), 252 to 256 (DTAGL), and 317 to 320 (NKWD). The KH-like domain occupies 373–457 (CKMSTPVLTR…PLRIELKTSH (85 aa)).

This sequence belongs to the TRAFAC class TrmE-Era-EngA-EngB-Septin-like GTPase superfamily. EngA (Der) GTPase family. In terms of assembly, associates with the 50S ribosomal subunit.

GTPase that plays an essential role in the late steps of ribosome biogenesis. The chain is GTPase Der from Verminephrobacter eiseniae (strain EF01-2).